Reading from the N-terminus, the 663-residue chain is Sodium/potassium/calcium exchanger 1 (663 aa).

Over 32 to 128 (SPSAIPALLT…DLFSVEERRQ (97 aa)) the chain is Extracellular. Asn-59, Asn-66, and Asn-100 each carry an N-linked (GlcNAc...) asparagine glycan. Residues 129–149 (GWVVLHIFGMMYVFVALAIVC) form a helical membrane-spanning segment. Residues 150 to 173 (DEYFVPALGVITEKLQISEDVAGA) are Cytoplasmic-facing. Residues 170-210 (VAGATFMAAGGSAPELFTSLIGVFISHSNVGIGTIVGSAVF) form an Alpha-1 repeat. A helical transmembrane segment spans residues 174–194 (TFMAAGGSAPELFTSLIGVFI). The Extracellular segment spans residues 195–200 (SHSNVG). A helical transmembrane segment spans residues 201-221 (IGTIVGSAVFNILFVIGTCAL). At 222-228 (FSREILH) the chain is on the cytoplasmic side. The helical transmembrane segment at 229–253 (LTWWPLFRDISFYIVDLLMLILFFL) threads the bilayer. The Extracellular segment spans residues 254–259 (DSVIDW). A helical transmembrane segment spans residues 260 to 276 (WESLLLLTAYATYVFTM). Topologically, residues 277 to 471 (KHNVSLEQWV…SLEWPETRKK (195 aa)) are cytoplasmic. 2 disordered regions span residues 308-343 (KSSV…SLHN) and 384-465 (LTGQ…SLEW). Positions 316–325 (DGTKPADGKK) are enriched in basic and acidic residues. Polar residues-rich tracts occupy residues 327 to 343 (QPTT…SLHN) and 399 to 412 (ASQN…ASDS). A Phosphoserine modification is found at Ser-337. The segment covering 413-423 (EPSKDKQKEDT) has biased composition (basic and acidic residues). The span at 434–461 (DNSEDSSSDSEDDSDDDSTDDEENDEPL) shows a compositional bias: acidic residues. A helical transmembrane segment spans residues 472–492 (QAIYLFLFPIVFPLWSTIPDV). The Extracellular portion of the chain corresponds to 493 to 499 (RNPDSKK). Residues 500-520 (FFVITFFGSIIWIAAFSYLMV) form a helical membrane-spanning segment. The Cytoplasmic segment spans residues 521–535 (WWAHQVGETIGISEE). The helical transmembrane segment at 536-556 (IMGLTILAAGTSIPDLITSVI) threads the bilayer. One copy of the Alpha-2 repeat lies at 543-574 (AAGTSIPDLITSVIVARKGLGDMAVSSSVGSN). Topologically, residues 557 to 574 (VARKGLGDMAVSSSVGSN) are extracellular. The helical transmembrane segment at 575-595 (IFDITVGLPVPWFLYSVFNGF) threads the bilayer. Topologically, residues 596–604 (SPVAVSSNG) are cytoplasmic. A helical transmembrane segment spans residues 605 to 625 (LFCAIVLLFLMLLFVIISIAL). At 626–632 (CKWKMNK) the chain is on the extracellular side. A helical transmembrane segment spans residues 633–653 (ILGVTMFALYFVFLIISVMLE). Over 654–663 (DRIISCPVSV) the chain is Cytoplasmic.

Belongs to the Ca(2+):cation antiporter (CaCA) (TC 2.A.19) family. SLC24A subfamily. Post-translationally, the uncleaved signal sequence is required for efficient membrane targeting and proper membrane integration and topology. Retinal rods. Localizes to the inner segment of rod photoreceptors.

Its subcellular location is the cell membrane. The enzyme catalyses Ca(2+)(out) + K(+)(out) + 4 Na(+)(in) = Ca(2+)(in) + K(+)(in) + 4 Na(+)(out). Its function is as follows. Calcium, potassium:sodium antiporter that transports 1 Ca(2+) and 1 K(+) in exchange for 4 Na(+). Critical component of the visual transduction cascade, controlling the calcium concentration of outer segments during light and darkness. Light causes a rapid lowering of cytosolic free calcium in the outer segment of both retinal rod and cone photoreceptors and the light-induced lowering of calcium is caused by extrusion via this protein which plays a key role in the process of light adaptation. In Gallus gallus (Chicken), this protein is Sodium/potassium/calcium exchanger 1 (SLC24A1).